The chain runs to 134 residues: UPF0412 protein YaaI (134 aa).

A signal peptide spans 1-23 (MKSVITISASLAISLMLCCTAQA).

This sequence belongs to the UPF0412 family.

This Escherichia coli (strain UTI89 / UPEC) protein is UPF0412 protein YaaI.